The following is a 599-amino-acid chain: Kinesin light chain 2 (599 aa).

Positions 78–143 form a coiled coil; that stretch reads ILALSSHLGA…KQHLLFMSQI (66 aa). Basic and acidic residues predominate over residues 154–163; that stretch reads EKGDVPKDSL. Positions 154–188 are disordered; the sequence is EKGDVPKDSLDDLFPNEDEQSPAPSPGGGDVAAQH. A phosphoserine mark is found at Ser-174 and Ser-178. TPR repeat units lie at residues 197–230, 239–272, 281–314, 323–356, and 365–398; these read LRTL…LEKT, ATML…REKT, AATL…REKV, AKQL…YATR, and AKTK…AHEK. The residue at position 443 (Ser-443) is a Phosphoserine. The stretch at 447–480 is one TPR 6 repeat; the sequence is NTTLRTLGALYRPEGKLEAAHTLEDCASRSRKQG. The interval 492 to 541 is disordered; the sequence is LLKDGSGRGHRRGSRDVAGPQSESDLEESGPAAEWSGDGSGSLRRSGSFG. Phosphoserine occurs at positions 505 and 515. The span at 532–541 shows a compositional bias: low complexity; sequence GSLRRSGSFG. 3 positions are modified to phosphoserine: Ser-574, Ser-575, and Ser-582.

The protein belongs to the kinesin light chain family. In terms of assembly, oligomeric complex composed of two heavy chains and two light chains. Interacts (via TPR repeats) with PLEKHM2.

Its subcellular location is the cytoplasm. It localises to the cytoskeleton. The protein resides in the lysosome membrane. Kinesin is a microtubule-associated force-producing protein that plays a role in organelle transport. The light chain functions in coupling of cargo to the heavy chain or in the modulation of its ATPase activity. Through binding with PLEKHM2 and ARL8B, recruits kinesin-1 to lysosomes and hence direct lysosomes movement toward microtubule plus ends. In Mus musculus (Mouse), this protein is Kinesin light chain 2.